The chain runs to 489 residues: Rhamnulokinase (489 aa).

13-17 (ASSGR) contributes to the ATP binding site. Residues Cys-68 and Cys-222 are joined by a disulfide bond. Residues Gly-83 and 236 to 238 (HDT) contribute to the substrate site. Asp-237 acts as the Proton acceptor in catalysis. Thr-259 is an ATP binding site. Asn-296 lines the substrate pocket. Gln-304 lines the ATP pocket. Cysteines 353 and 370 form a disulfide. Gly-402 contributes to the ATP binding site. A disulfide bridge connects residues Cys-413 and Cys-417.

This sequence belongs to the rhamnulokinase family. Monomer. Requires Mg(2+) as cofactor.

It carries out the reaction L-rhamnulose + ATP = L-rhamnulose 1-phosphate + ADP + H(+). The protein operates within carbohydrate degradation; L-rhamnose degradation; glycerone phosphate from L-rhamnose: step 2/3. Functionally, involved in the catabolism of L-rhamnose (6-deoxy-L-mannose). Catalyzes the transfer of the gamma-phosphate group from ATP to the 1-hydroxyl group of L-rhamnulose to yield L-rhamnulose 1-phosphate. This chain is Rhamnulokinase, found in Escherichia coli O127:H6 (strain E2348/69 / EPEC).